Consider the following 218-residue polypeptide: Phosphatidylserine decarboxylase proenzyme (218 aa).

Ser-182 functions as the Schiff-base intermediate with substrate; via pyruvic acid in the catalytic mechanism. A Pyruvic acid (Ser); by autocatalysis modification is found at Ser-182.

It belongs to the phosphatidylserine decarboxylase family. PSD-A subfamily. Heterodimer of a large membrane-associated beta subunit and a small pyruvoyl-containing alpha subunit. The cofactor is pyruvate. Is synthesized initially as an inactive proenzyme. Formation of the active enzyme involves a self-maturation process in which the active site pyruvoyl group is generated from an internal serine residue via an autocatalytic post-translational modification. Two non-identical subunits are generated from the proenzyme in this reaction, and the pyruvate is formed at the N-terminus of the alpha chain, which is derived from the carboxyl end of the proenzyme. The post-translation cleavage follows an unusual pathway, termed non-hydrolytic serinolysis, in which the side chain hydroxyl group of the serine supplies its oxygen atom to form the C-terminus of the beta chain, while the remainder of the serine residue undergoes an oxidative deamination to produce ammonia and the pyruvoyl prosthetic group on the alpha chain.

The protein localises to the cell membrane. It carries out the reaction a 1,2-diacyl-sn-glycero-3-phospho-L-serine + H(+) = a 1,2-diacyl-sn-glycero-3-phosphoethanolamine + CO2. Its pathway is phospholipid metabolism; phosphatidylethanolamine biosynthesis; phosphatidylethanolamine from CDP-diacylglycerol: step 2/2. Catalyzes the formation of phosphatidylethanolamine (PtdEtn) from phosphatidylserine (PtdSer). The polypeptide is Phosphatidylserine decarboxylase proenzyme (Oleidesulfovibrio alaskensis (strain ATCC BAA-1058 / DSM 17464 / G20) (Desulfovibrio alaskensis)).